Consider the following 483-residue polypeptide: Inositol-pentakisphosphate 2-kinase (483 aa).

An EXKPK motif motif is present at residues 140–144 (EIKPK). The disordered stretch occupies residues 279–298 (SNRSGEPRKMHLSESKPHCE). Over residues 281–297 (RSGEPRKMHLSESKPHC) the composition is skewed to basic and acidic residues.

It belongs to the IPK1 type 2 family. Expressed both maternally and zygotically. Expressed in cleavage-stage embryos. Ubiquitously distributed throughout blastula stages of embryogenesis. At the onset of gastrulation, it is enriched in cells around the blastoderm margin. At shield stage, expression is detected in the deep involuted cells that contribute to mesendoderm. During mid and late gastrula stages, it is strongly expressed in axial mesendoderm. However, it is not present in the nascent tailbud at yolk plug closure (YPC) stage. Expression in axial mesendoderm is reduced at the 2 somite stage (SS). At 6 SS, it is expressed in cells surrounding Kupffer's vesicle, but apparently not within. By 10 SS, it is no longer detected as a specific signal above background.

The protein resides in the cytoplasm. It is found in the nucleus. It carries out the reaction 1D-myo-inositol 1,3,4,5,6-pentakisphosphate + ATP = 1D-myo-inositol hexakisphosphate + ADP + H(+). Its function is as follows. Phosphorylates Ins(1,3,4,5,6)P5 at position 2 to form Ins(1,2,3,4,5,6)P6 (InsP6 or phytate). InsP6 is involved in many processes such as mRNA export, non-homologous end-joining, endocytosis and ion channel regulation. InsP6 also acts as a key regulator of left-right asymmetry in embryo, probably by regulating asymmetric Ca(2+) during left-right specification. The sequence is that of Inositol-pentakisphosphate 2-kinase (ippk) from Danio rerio (Zebrafish).